The following is a 553-amino-acid chain: Carboxypeptidase Y homolog A (553 aa).

The first 17 residues, methionine 1–valine 17, serve as a signal peptide directing secretion. A propeptide spanning residues serine 18–lysine 134 is cleaved from the precursor. Intrachain disulfides connect cysteine 189–cysteine 428, cysteine 323–cysteine 337, cysteine 347–cysteine 370, cysteine 354–cysteine 363, and cysteine 392–cysteine 398. A glycan (N-linked (GlcNAc...) asparagine) is linked at asparagine 220. Serine 276 is an active-site residue. The active site involves aspartate 467. Asparagine 518 carries N-linked (GlcNAc...) asparagine glycosylation. Histidine 529 is an active-site residue.

This sequence belongs to the peptidase S10 family.

Its subcellular location is the vacuole. It catalyses the reaction Release of a C-terminal amino acid with broad specificity.. Its function is as follows. Vacuolar carboxypeptidase involved in degradation of small peptides. Digests preferentially peptides containing an aliphatic or hydrophobic residue in P1' position, as well as methionine, leucine or phenylalanine in P1 position of ester substrate. The chain is Carboxypeptidase Y homolog A (cpyA) from Talaromyces stipitatus (strain ATCC 10500 / CBS 375.48 / QM 6759 / NRRL 1006) (Penicillium stipitatum).